Here is a 375-residue protein sequence, read N- to C-terminus: Ketohexokinase (375 aa).

Aspartate 319 is a beta-D-fructose binding site.

This sequence belongs to the carbohydrate kinase PfkB family. Homodimer.

The catalysed reaction is beta-D-fructose + ATP = beta-D-fructose 1-phosphate + ADP + H(+). Its pathway is carbohydrate metabolism; fructose metabolism. Its activity is regulated as follows. Activated in the presence of 0.5 M KCl. 85% activity at 3.5 M KCl. 60% activity without KCl. Functionally, catalyzes the ATP-dependent phosphorylation of the ketose sugar fructose to fructose-1-phosphate. Does not produce fructose-6-phosphate. The sugars D-glucose, D-galactose, L-rhamnose, D-xylose, L-arabinose and D-ribose are not substrates of this enzyme. This Haloferax volcanii (strain ATCC 29605 / DSM 3757 / JCM 8879 / NBRC 14742 / NCIMB 2012 / VKM B-1768 / DS2) (Halobacterium volcanii) protein is Ketohexokinase.